Consider the following 463-residue polypeptide: ATP-dependent protease ATPase subunit HslU (463 aa).

Residues I19, 61–66 (GVGKTE), D277, E341, and R413 each bind ATP.

It belongs to the ClpX chaperone family. HslU subfamily. A double ring-shaped homohexamer of HslV is capped on each side by a ring-shaped HslU homohexamer. The assembly of the HslU/HslV complex is dependent on binding of ATP.

The protein resides in the cytoplasm. ATPase subunit of a proteasome-like degradation complex; this subunit has chaperone activity. The binding of ATP and its subsequent hydrolysis by HslU are essential for unfolding of protein substrates subsequently hydrolyzed by HslV. HslU recognizes the N-terminal part of its protein substrates and unfolds these before they are guided to HslV for hydrolysis. The chain is ATP-dependent protease ATPase subunit HslU from Bacillus cereus (strain AH187).